Reading from the N-terminus, the 62-residue chain is UPF0291 protein CLJ_B2839 (62 aa).

This sequence belongs to the UPF0291 family.

Its subcellular location is the cytoplasm. This Clostridium botulinum (strain 657 / Type Ba4) protein is UPF0291 protein CLJ_B2839.